The following is a 114-amino-acid chain: Lymphotactin (114 aa).

The signal sequence occupies residues 1–21; that stretch reads MRLLLLTFLGVCCLTPWVVEG. Residues Cys32 and Cys69 are joined by a disulfide bond. The disordered stretch occupies residues 92–114; it reads KNMAETVPTGAQRSTSTAITLTG. The segment covering 100 to 114 has biased composition (polar residues); the sequence is TGAQRSTSTAITLTG.

Belongs to the intercrine gamma family. In terms of tissue distribution, expressed in activated CD8(+) T cells. In the thymus, expressed by medullary thymic epithelial cells.

The protein resides in the secreted. In terms of biological role, chemotactic activity for lymphocytes but not for monocytes or neutrophils. In thymus, mediates medullary accumulation of thymic dendritic cells and contributes to regulatoy T cell development, playing a role in self-tolerance establishment. The sequence is that of Lymphotactin (Xcl1) from Mus musculus (Mouse).